A 1178-amino-acid chain; its full sequence is Ubiquitin carboxyl-terminal hydrolase cyk-3 (1178 aa).

3 consecutive EF-hand domains span residues 28–60, 175–210, and 211–246; these read EEYR…GAQI, FPDS…LCRG, and PLPG…LNVP. The Ca(2+) site is built by aspartate 188, asparagine 190, aspartate 192, glutamine 194, glutamate 199, aspartate 224, aspartate 226, aspartate 228, and glutamate 235. The DUSP domain occupies 296–410; the sequence is ESRKMELQIV…VDSQFTRKYL (115 aa). In terms of domain architecture, USP spans 570 to 1175; it reads VGLVNYGNFC…GAYLLFYERK (606 aa). The active-site Nucleophile is the cysteine 579. The disordered stretch occupies residues 681-725; that stretch reads SNKSLHPSPEESEGTDSNKLSDSSKKKEADKEEADEEKAERSWTE. Histidine 1134 functions as the Proton acceptor in the catalytic mechanism.

It belongs to the peptidase C19 family. Expressed in excretory cells, coelomocytes, head neurons, hypodermal cells, germ cells, oocytes, sperm and pharynx (at protein level).

It is found in the nucleus. The protein resides in the cytoplasm. It localises to the cytoskeleton. The protein localises to the microtubule organizing center. The catalysed reaction is Thiol-dependent hydrolysis of ester, thioester, amide, peptide and isopeptide bonds formed by the C-terminal Gly of ubiquitin (a 76-residue protein attached to proteins as an intracellular targeting signal).. Ubiquitin-protein hydrolase which cleaves ubiquitin from ubiquitinated proteins. Plays a role in embryo osmoregulation. Probably by regulating osmosis, controls actin redistribution in the 1-cell embryos and thus actin-dependent processes such as cytokinesis and P-granules segregation. During the first embryonic mitotic division, involved in the formation of a functional microtubule organizing center provided by the male pronucleus. Acts as a positive regulator of the mTORC1 signaling. The sequence is that of Ubiquitin carboxyl-terminal hydrolase cyk-3 from Caenorhabditis elegans.